The following is a 228-amino-acid chain: 3-dehydroquinate dehydratase (228 aa).

3-dehydroquinate is bound by residues 30–32 (EWR) and Arg62. Residue His118 is the Proton donor/acceptor of the active site. Lys143 functions as the Schiff-base intermediate with substrate in the catalytic mechanism. Arg186, Ser205, and Gln209 together coordinate 3-dehydroquinate.

It belongs to the type-I 3-dehydroquinase family. As to quaternary structure, homodimer.

The catalysed reaction is 3-dehydroquinate = 3-dehydroshikimate + H2O. It participates in metabolic intermediate biosynthesis; chorismate biosynthesis; chorismate from D-erythrose 4-phosphate and phosphoenolpyruvate: step 3/7. In terms of biological role, involved in the third step of the chorismate pathway, which leads to the biosynthesis of aromatic amino acids. Catalyzes the cis-dehydration of 3-dehydroquinate (DHQ) and introduces the first double bond of the aromatic ring to yield 3-dehydroshikimate. The polypeptide is 3-dehydroquinate dehydratase (Streptococcus pyogenes serotype M12 (strain MGAS9429)).